The chain runs to 570 residues: Periplasmic trehalase (570 aa).

An N-terminal signal peptide occupies residues 1–34 (MIPPEIRRSVLLQKAIKLALAGTLLTFASFSATA). Substrate is bound by residues Arg-159, 166-167 (WD), Asn-203, 212-214 (RSQ), 284-286 (RPE), and Gly-317. Active-site proton donor/acceptor residues include Asp-319 and Glu-503. Residue Glu-518 participates in substrate binding. The interval 544–570 (KPCDSVPSTRPASLSATPTKTPSAATQ) is disordered. Residues 554-570 (PASLSATPTKTPSAATQ) are compositionally biased toward low complexity.

Belongs to the glycosyl hydrolase 37 family. In terms of assembly, monomer.

It is found in the periplasm. The catalysed reaction is alpha,alpha-trehalose + H2O = alpha-D-glucose + beta-D-glucose. Functionally, provides the cells with the ability to utilize trehalose at high osmolarity by splitting it into glucose molecules that can subsequently be taken up by the phosphotransferase-mediated uptake system. The chain is Periplasmic trehalase from Salmonella paratyphi B (strain ATCC BAA-1250 / SPB7).